The chain runs to 551 residues: Glucose-6-phosphate isomerase 2 (551 aa).

E359 acts as the Proton donor in catalysis. Active-site residues include H390 and K514.

This sequence belongs to the GPI family.

The protein localises to the cytoplasm. It carries out the reaction alpha-D-glucose 6-phosphate = beta-D-fructose 6-phosphate. It functions in the pathway carbohydrate biosynthesis; gluconeogenesis. It participates in carbohydrate degradation; glycolysis; D-glyceraldehyde 3-phosphate and glycerone phosphate from D-glucose: step 2/4. In terms of biological role, catalyzes the reversible isomerization of glucose-6-phosphate to fructose-6-phosphate. The polypeptide is Glucose-6-phosphate isomerase 2 (Streptomyces coelicolor (strain ATCC BAA-471 / A3(2) / M145)).